Reading from the N-terminus, the 108-residue chain is Large ribosomal subunit protein bL21 (108 aa).

This sequence belongs to the bacterial ribosomal protein bL21 family. As to quaternary structure, part of the 50S ribosomal subunit. Contacts protein L20.

This protein binds to 23S rRNA in the presence of protein L20. The protein is Large ribosomal subunit protein bL21 of Orientia tsutsugamushi (strain Ikeda) (Rickettsia tsutsugamushi).